The chain runs to 111 residues: Sulditoxin subunit B (111 aa).

The signal sequence occupies residues 1-19; sequence MKTLLLALAVVVLVCLGSA. A propeptide spanning residues 20 to 34 is cleaved from the precursor; the sequence is NELGLGRQQIDRGRR. Gln-35 is modified (pyrrolidone carboxylic acid). Intrachain disulfides connect Cys-44–Cys-68, Cys-47–Cys-55, Cys-61–Cys-87, Cys-91–Cys-102, and Cys-103–Cys-108.

The protein belongs to the three-finger toxin family. Ancestral subfamily. Boigatoxin sub-subfamily. As to quaternary structure, heterodimer of sulditoxin subunits A and B; probably disulfide-linked. Expressed by the venom gland.

Its subcellular location is the secreted. Reptile-specific neurotoxin (tested on geckos). Inhibits nicotinic acetylcholine receptor (nAChR). Not toxic to mammals (tested on mice). The sequence is that of Sulditoxin subunit B from Spilotes sulphureus (Amazon puffing snake).